Reading from the N-terminus, the 184-residue chain is Photosystem I assembly protein Ycf4 (184 aa).

Helical transmembrane passes span 22-42 (FFWA…GTSS) and 57-77 (ISFF…LFIS).

This sequence belongs to the Ycf4 family.

It is found in the plastid. The protein localises to the chloroplast thylakoid membrane. Functionally, seems to be required for the assembly of the photosystem I complex. This Lemna minor (Common duckweed) protein is Photosystem I assembly protein Ycf4.